The primary structure comprises 389 residues: Succinyl-diaminopimelate desuccinylase (389 aa).

His-72 contacts Zn(2+). Asp-74 is an active-site residue. Zn(2+) is bound at residue Asp-105. Catalysis depends on Glu-144, which acts as the Proton acceptor. Zn(2+)-binding residues include Glu-145, Glu-173, and His-362.

It belongs to the peptidase M20A family. DapE subfamily. Homodimer. It depends on Zn(2+) as a cofactor. Co(2+) is required as a cofactor.

It carries out the reaction N-succinyl-(2S,6S)-2,6-diaminopimelate + H2O = (2S,6S)-2,6-diaminopimelate + succinate. It participates in amino-acid biosynthesis; L-lysine biosynthesis via DAP pathway; LL-2,6-diaminopimelate from (S)-tetrahydrodipicolinate (succinylase route): step 3/3. Its function is as follows. Catalyzes the hydrolysis of N-succinyl-L,L-diaminopimelic acid (SDAP), forming succinate and LL-2,6-diaminopimelate (DAP), an intermediate involved in the bacterial biosynthesis of lysine and meso-diaminopimelic acid, an essential component of bacterial cell walls. This is Succinyl-diaminopimelate desuccinylase from Nitrobacter hamburgensis (strain DSM 10229 / NCIMB 13809 / X14).